A 1373-amino-acid chain; its full sequence is DNA-directed RNA polymerase subunit beta (1373 aa).

This sequence belongs to the RNA polymerase beta chain family. As to quaternary structure, the RNAP catalytic core consists of 2 alpha, 1 beta, 1 beta' and 1 omega subunit. When a sigma factor is associated with the core the holoenzyme is formed, which can initiate transcription.

The enzyme catalyses RNA(n) + a ribonucleoside 5'-triphosphate = RNA(n+1) + diphosphate. Its function is as follows. DNA-dependent RNA polymerase catalyzes the transcription of DNA into RNA using the four ribonucleoside triphosphates as substrates. The protein is DNA-directed RNA polymerase subunit beta of Rickettsia massiliae (strain Mtu5).